Here is a 343-residue protein sequence, read N- to C-terminus: Ribosomal RNA small subunit methyltransferase C (343 aa).

It belongs to the methyltransferase superfamily. RsmC family. As to quaternary structure, monomer.

The protein resides in the cytoplasm. The catalysed reaction is guanosine(1207) in 16S rRNA + S-adenosyl-L-methionine = N(2)-methylguanosine(1207) in 16S rRNA + S-adenosyl-L-homocysteine + H(+). Functionally, specifically methylates the guanine in position 1207 of 16S rRNA in the 30S particle. The chain is Ribosomal RNA small subunit methyltransferase C from Escherichia coli O6:H1 (strain CFT073 / ATCC 700928 / UPEC).